Reading from the N-terminus, the 466-residue chain is Transcription factor SOX-10 (466 aa).

5 disordered regions span residues methionine 1–lysine 67, leucine 160–glycine 198, aspartate 213–asparagine 275, glutamine 355–threonine 375, and arginine 433–proline 466. Over residues leucine 23–glycine 32 the composition is skewed to low complexity. Serine 24 carries the post-translational modification Phosphoserine. The dimerization (DIM) stretch occupies residues glutamate 62–proline 102. The HMG box DNA-binding region spans valine 104–lysine 172. 2 stretches are compositionally biased toward basic and acidic residues: residues leucine 160 to tyrosine 173 and alanine 254 to isoleucine 271. A transactivation domain (TAM) region spans residues proline 228–valine 310. The transactivation domain (TAC) stretch occupies residues lysine 353–proline 466. Residues serine 440–proline 466 show a composition bias toward polar residues.

Monomer. Interacts with Armcx3 at the mitochondrial outer membrane surface. Interacts with PAX3. As to expression, predominant expression in glial cells of the nervous system.

The protein resides in the cytoplasm. It localises to the nucleus. Its subcellular location is the mitochondrion outer membrane. Functionally, transcription factor that plays a central role in developing and mature glia. Specifically activates expression of myelin genes, during oligodendrocyte (OL) maturation, such as DUSP15 and MYRF, thereby playing a central role in oligodendrocyte maturation and CNS myelination. Once induced, MYRF cooperates with SOX10 to implement the myelination program. Transcriptional activator of MITF, acting synergistically with PAX3. Transcriptional activator of MBP, via binding to the gene promoter. This is Transcription factor SOX-10 (Sox10) from Rattus norvegicus (Rat).